Here is a 104-residue protein sequence, read N- to C-terminus: Protein METHYLENE BLUE SENSITIVITY 2 (104 aa).

The span at 1–11 (MTGKAKPKKHT) shows a compositional bias: basic residues. 2 disordered regions span residues 1–46 (MTGK…GHAK) and 64–104 (IHHE…SLKK). 2 stretches are compositionally biased toward basic and acidic residues: residues 36-46 (RTGKEKGGHAK) and 73-82 (LTYEEPRNLH).

Its subcellular location is the nucleus. The protein resides in the cytoplasm. It is found in the stress granule. In terms of biological role, required for acclimation to reactive oxygen species (ROS) responses downstream of beta-cyclocitral, including singlet oxygen 1O(2) detoxification reactions, especially upon light-mediated photooxidative stress, and leading to programmed cell death. Prevents leaf senescence. This chain is Protein METHYLENE BLUE SENSITIVITY 2, found in Arabidopsis thaliana (Mouse-ear cress).